The following is a 409-amino-acid chain: Phosphatidylserine decarboxylase proenzyme, mitochondrial (409 aa).

The transit peptide at 1-52 directs the protein to the mitochondrion; the sequence is MATSVGHRCLGLLHGVAPWRSSLHPCEITALSQSLQPLRKLPFRAFRTDARK. Positions 36–103 are necessary for localization to both lipid droplets and mitochondria; it reads QPLRKLPFRA…LGLEIPPKLA (68 aa). At 53-63 the chain is on the mitochondrial matrix side; the sequence is IHTAPARTMFL. Residues 64–82 form a helical membrane-spanning segment; it reads LRPLPILLVTGGGYAGYRQ. Topologically, residues 83 to 409 are mitochondrial intermembrane; that stretch reads YEKYRERELE…IRFGEALGSL (327 aa). Catalysis depends on charge relay system; for autoendoproteolytic cleavage activity residues aspartate 191, histidine 267, and serine 378. Catalysis depends on serine 378, which acts as the Schiff-base intermediate with substrate; via pyruvic acid; for decarboxylase activity. Serine 378 is modified (pyruvic acid (Ser); by autocatalysis).

Belongs to the phosphatidylserine decarboxylase family. PSD-B subfamily. Eukaryotic type I sub-subfamily. In terms of assembly, heterodimer of a large membrane-associated beta subunit and a small pyruvoyl-containing alpha subunit. The cofactor is pyruvate. Is synthesized initially as an inactive proenzyme. Formation of the active enzyme involves a self-maturation process in which the active site pyruvoyl group is generated from an internal serine residue via an autocatalytic post-translational modification. Two non-identical subunits are generated from the proenzyme in this reaction, and the pyruvate is formed at the N-terminus of the alpha chain, which is derived from the carboxyl end of the proenzyme. The autoendoproteolytic cleavage occurs by a canonical serine protease mechanism, in which the side chain hydroxyl group of the serine supplies its oxygen atom to form the C-terminus of the beta chain, while the remainder of the serine residue undergoes an oxidative deamination to produce ammonia and the pyruvoyl prosthetic group on the alpha chain. During this reaction, the Ser that is part of the protease active site of the proenzyme becomes the pyruvoyl prosthetic group, which constitutes an essential element of the active site of the mature decarboxylase.

It localises to the mitochondrion inner membrane. Its subcellular location is the cytoplasm. It is found in the lipid droplet. The catalysed reaction is a 1,2-diacyl-sn-glycero-3-phospho-L-serine + H(+) = a 1,2-diacyl-sn-glycero-3-phosphoethanolamine + CO2. The protein operates within phospholipid metabolism; phosphatidylethanolamine biosynthesis. Catalyzes the formation of phosphatidylethanolamine (PtdEtn) from phosphatidylserine (PtdSer). Plays a central role in phospholipid metabolism and in the interorganelle trafficking of phosphatidylserine. May be involved in lipid droplet biogenesis at the endoplasmic reticulum membrane. This is Phosphatidylserine decarboxylase proenzyme, mitochondrial from Homo sapiens (Human).